Reading from the N-terminus, the 202-residue chain is Superoxide dismutase [Mn], mitochondrial (202 aa).

Residues 1–5 (HGRGM) constitute a mitochondrion transit peptide. His31 is a Mn(2+) binding site. Tyr39 is subject to 3'-nitrotyrosine. Lys49 carries the N6-acetyllysine; alternate modification. Lys49 carries the post-translational modification N6-succinyllysine; alternate. Mn(2+) is bound at residue His79. Residue Lys95 is modified to N6-acetyllysine. N6-acetyllysine; alternate is present on residues Lys103 and Lys111. N6-succinyllysine; alternate is present on residues Lys103 and Lys111. Residues Asp164 and His168 each contribute to the Mn(2+) site. Lys183 is modified (N6-acetyllysine).

It belongs to the iron/manganese superoxide dismutase family. As to quaternary structure, homotetramer. It depends on Mn(2+) as a cofactor. Post-translationally, nitrated under oxidative stress. Nitration coupled with oxidation inhibits the catalytic activity. In terms of processing, acetylation at Lys-122 decreases enzymatic activity. Deacetylated by SIRT3 upon exposure to ionizing radiations or after long fasting. Polyubiquitinated; leading to proteasomal degradation. Deubiquitinated by USP36 which increases protein stability.

It localises to the mitochondrion matrix. The catalysed reaction is 2 superoxide + 2 H(+) = H2O2 + O2. In terms of biological role, destroys superoxide anion radicals which are normally produced within the cells and which are toxic to biological systems. This Oryctolagus cuniculus (Rabbit) protein is Superoxide dismutase [Mn], mitochondrial (SOD2).